Here is a 356-residue protein sequence, read N- to C-terminus: Histidinol-phosphate aminotransferase 1 (356 aa).

Lys-213 carries the N6-(pyridoxal phosphate)lysine modification.

The protein belongs to the class-II pyridoxal-phosphate-dependent aminotransferase family. Histidinol-phosphate aminotransferase subfamily. In terms of assembly, homodimer. Pyridoxal 5'-phosphate is required as a cofactor.

The enzyme catalyses L-histidinol phosphate + 2-oxoglutarate = 3-(imidazol-4-yl)-2-oxopropyl phosphate + L-glutamate. It participates in amino-acid biosynthesis; L-histidine biosynthesis; L-histidine from 5-phospho-alpha-D-ribose 1-diphosphate: step 7/9. The protein is Histidinol-phosphate aminotransferase 1 (hisC1) of Bordetella parapertussis (strain 12822 / ATCC BAA-587 / NCTC 13253).